Reading from the N-terminus, the 128-residue chain is Small ribosomal subunit protein uS11 (128 aa).

The protein belongs to the universal ribosomal protein uS11 family. Part of the 30S ribosomal subunit. Interacts with proteins S7 and S18. Binds to IF-3.

Its function is as follows. Located on the platform of the 30S subunit, it bridges several disparate RNA helices of the 16S rRNA. Forms part of the Shine-Dalgarno cleft in the 70S ribosome. In Wolbachia pipientis subsp. Culex pipiens (strain wPip), this protein is Small ribosomal subunit protein uS11.